The following is a 452-amino-acid chain: UPF0210 protein Ccel_1722 (452 aa).

It belongs to the UPF0210 family. Homodimer.

The sequence is that of UPF0210 protein Ccel_1722 from Ruminiclostridium cellulolyticum (strain ATCC 35319 / DSM 5812 / JCM 6584 / H10) (Clostridium cellulolyticum).